A 595-amino-acid chain; its full sequence is Aspartate--tRNA ligase (595 aa).

Residue E173 coordinates L-aspartate. An aspartate region spans residues 197 to 200 (QLFK). Residue R219 coordinates L-aspartate. ATP contacts are provided by residues 219–221 (RDE) and Q228. H449 is a binding site for L-aspartate. E483 contributes to the ATP binding site. R490 serves as a coordination point for L-aspartate. 535 to 538 (GLDR) contributes to the ATP binding site.

Belongs to the class-II aminoacyl-tRNA synthetase family. Type 1 subfamily. In terms of assembly, homodimer.

Its subcellular location is the cytoplasm. The enzyme catalyses tRNA(Asp) + L-aspartate + ATP = L-aspartyl-tRNA(Asp) + AMP + diphosphate. In terms of biological role, catalyzes the attachment of L-aspartate to tRNA(Asp) in a two-step reaction: L-aspartate is first activated by ATP to form Asp-AMP and then transferred to the acceptor end of tRNA(Asp). The protein is Aspartate--tRNA ligase of Shewanella sediminis (strain HAW-EB3).